The sequence spans 208 residues: Ribosomal RNA large subunit methyltransferase E (208 aa).

Positions 63, 65, 83, 99, and 124 each coordinate S-adenosyl-L-methionine. Lysine 164 (proton acceptor) is an active-site residue.

It belongs to the class I-like SAM-binding methyltransferase superfamily. RNA methyltransferase RlmE family.

It is found in the cytoplasm. The enzyme catalyses uridine(2552) in 23S rRNA + S-adenosyl-L-methionine = 2'-O-methyluridine(2552) in 23S rRNA + S-adenosyl-L-homocysteine + H(+). In terms of biological role, specifically methylates the uridine in position 2552 of 23S rRNA at the 2'-O position of the ribose in the fully assembled 50S ribosomal subunit. This chain is Ribosomal RNA large subunit methyltransferase E, found in Enterobacter sp. (strain 638).